A 633-amino-acid polypeptide reads, in one-letter code: Terminal nucleotidyltransferase 4B (633 aa).

Residues 1–115 (MFRSGERPLG…GGGRADGGGG (115 aa)) form a disordered region. The segment covering 25 to 34 (ETTNNNNNHH) has biased composition (polar residues). Composition is skewed to low complexity over residues 36 to 52 (PAAWARRASAGPSASPV) and 60 to 70 (RPAAALPASES). The span at 87-98 (ASTYGLNYSLLQ) shows a compositional bias: polar residues. Residues 103–115 (RAAGGGRADGGGG) are compositionally biased toward gly residues. Mg(2+) is bound by residues Asp-191 and Asp-193. Residues Gly-254, Lys-279, Ser-297, Tyr-298, Asn-382, and Arg-386 each contribute to the ATP site. The 61-residue stretch at 322-382 (NYGVLLIEFF…YIEDPLQPGN (61 aa)) folds into the PAP-associated domain. The segment at 484–633 (LGKCRSNASE…RDAPLSELCR (150 aa)) is disordered. The segment covering 492–519 (SEPLSKHSSNSSSGPVSSSSATQSSSSD) has biased composition (low complexity). Lys-531 is covalently cross-linked (Glycyl lysine isopeptide (Lys-Gly) (interchain with G-Cter in SUMO2)). Residues 542 to 552 (RVGSQDVSLEV) show a composition bias toward polar residues. Phosphoserine is present on Ser-545. Residues Lys-558, Lys-573, and Lys-587 each participate in a glycyl lysine isopeptide (Lys-Gly) (interchain with G-Cter in SUMO2) cross-link. A compositionally biased stretch (polar residues) spans 559 to 614 (MQSTQTTNTPNNANKSQHGSARLFRSSSKGFQGTAQTSHGALMTSKQHQGKSNTQY). The Basic, involved in binding of the RNA primer motif lies at 618–624 (KKRRHKR).

Belongs to the DNA polymerase type-B-like family. As to quaternary structure, component of a nucleolar TRAMP-like complex, an ATP-dependent exosome regulatory complex consisting of a helicase (MTREX), an oligadenylate polymerase (TENT4B or TENT4A), and a substrate specific RNA-binding factor (ZCCHC7 or ZCCHC8). Several TRAMP-like complexes exist with specific compositions and are associated with nuclear, or nucleolar RNA exosomes. Requires Mg(2+) as cofactor. It depends on Mn(2+) as a cofactor.

It is found in the nucleus. The protein localises to the nucleolus. Its subcellular location is the cytoplasm. It catalyses the reaction RNA(n) + ATP = RNA(n)-3'-adenine ribonucleotide + diphosphate. Terminal nucleotidyltransferase that catalyzes preferentially the transfer of ATP and GTP on RNA 3' poly(A) tail creating a heterogeneous 3' poly(A) tail leading to mRNAs stabilization by protecting mRNAs from active deadenylation. Also functions as a catalytic subunit of a TRAMP-like complex which has a poly(A) RNA polymerase activity and is involved in a post-transcriptional quality control mechanism. Polyadenylation with short oligo(A) tails is required for the degradative activity of the exosome on several of its nuclear RNA substrates. Doesn't need a cofactor for polyadenylation activity (in vitro). Plays a role in replication-dependent histone mRNA degradation, probably through terminal uridylation of mature histone mRNAs. May play a role in sister chromatid cohesion. The sequence is that of Terminal nucleotidyltransferase 4B from Mus musculus (Mouse).